The sequence spans 215 residues: uncharacterized protein (215 aa).

S-adenosyl-L-methionine contacts are provided by G53, E74, and D97.

This sequence belongs to the methyltransferase superfamily. YrrT family.

In terms of biological role, could be a S-adenosyl-L-methionine-dependent methyltransferase. This is an uncharacterized protein from Geobacillus kaustophilus (strain HTA426).